Consider the following 285-residue polypeptide: Diphthine methyl ester synthase (285 aa).

Residues Leu9, Asp84, Gly87, 112–113 (SI), and Leu163 each bind S-adenosyl-L-methionine. A Phosphoserine modification is found at Ser171. The S-adenosyl-L-methionine site is built by Val225 and His250.

The protein belongs to the diphthine synthase family.

The enzyme catalyses 2-[(3S)-amino-3-carboxypropyl]-L-histidyl-[translation elongation factor 2] + 4 S-adenosyl-L-methionine = diphthine methyl ester-[translation elongation factor 2] + 4 S-adenosyl-L-homocysteine + 3 H(+). Its pathway is protein modification; peptidyl-diphthamide biosynthesis. In terms of biological role, S-adenosyl-L-methionine-dependent methyltransferase that catalyzes four methylations of the modified target histidine residue in translation elongation factor 2 (EF-2), to form an intermediate called diphthine methyl ester. The four successive methylation reactions represent the second step of diphthamide biosynthesis. The chain is Diphthine methyl ester synthase (DPH5) from Homo sapiens (Human).